The primary structure comprises 107 residues: Replication initiation control protein YabA (107 aa).

4 residues coordinate Zn(2+): His81, Cys83, Cys97, and Cys100.

The protein belongs to the YabA family. In terms of assembly, homotetramer. Interacts with both DnaA and DnaN, acting as a bridge between these two proteins. Requires Zn(2+) as cofactor.

It localises to the cytoplasm. The protein resides in the nucleoid. Functionally, involved in control of chromosome replication initiation. Inhibits the cooperative binding of DnaA to the oriC region, thus negatively regulating initiation of chromosome replication. Inhibits the ability of DnaA-ATP to form a helix on DNA; does not disassemble preformed DnaA-DNA helices. Decreases the residence time of DnaA on the chromosome at its binding sites (oriC, replication forks and promoter-binding sites). Tethers DnaA to the replication machinery via the DNA polymerase beta sliding clamp subunit (dnaN). Associates with oriC and other DnaA targets on the chromosome in a DnaA-dependent manner. The chain is Replication initiation control protein YabA from Streptococcus equi subsp. equi (strain 4047).